We begin with the raw amino-acid sequence, 122 residues long: Large ribosomal subunit protein uL14 (122 aa).

The protein belongs to the universal ribosomal protein uL14 family. In terms of assembly, part of the 50S ribosomal subunit. Forms a cluster with proteins L3 and L19. In the 70S ribosome, L14 and L19 interact and together make contacts with the 16S rRNA in bridges B5 and B8.

Functionally, binds to 23S rRNA. Forms part of two intersubunit bridges in the 70S ribosome. In Exiguobacterium sp. (strain ATCC BAA-1283 / AT1b), this protein is Large ribosomal subunit protein uL14.